The primary structure comprises 303 residues: Putative ankyrin repeat protein R601 (303 aa).

4 ANK repeats span residues 86 to 115, 117 to 146, 147 to 176, and 200 to 233; these read DDNMFLKLAVNYNDEEVLKYLIDSGIDVTV, NNFAVKLQSGIIHNNRIIDLLINNGADITV, DNYFPYRYAASEQNKEALKILFSYNPNVDS, and NADVNINNGAILRENNQYYPVVKSLLAAGADVSY.

The polypeptide is Putative ankyrin repeat protein R601 (Acanthamoeba polyphaga (Amoeba)).